The following is a 422-amino-acid chain: MGQTLTEKIFSAHTNKQVSAGEIIESPIDMVIGNDITTPLSIRAFEESGATKLANPDGFCIVMDHFIPAKDIASANQARISRDFAKKHQLKHYFDERDMGIEHAILPEKGLVLPGDVIIGADSHTCTHGALGAFATGMGSTDLAYAMITGKNWFKVPPSIRVVFKGKLQEHVYGKDLILEIIRQIGVDGALYKALEFQGDTIEQLSMDDRFSLCNMAIEAGAKNGIIAADSITKEFLASRKSLRAEPKYYQADADALYEQTIEIDVEKLEPVIAYPFLPSNGKSISQAVKDDLKIDQAFIGSCTNGRLSDLRIAAQILKGKRVHPDVRLIITPGTQQIYKDAHQEGLIDTLLEAGALISNPTCGACLGGYMGILGDNERCVSTTNRNFVGRMGARSSEVYLANSAVAAASALKGKITDPRKL.

[4Fe-4S] cluster-binding residues include Cys-303, Cys-363, and Cys-366.

This sequence belongs to the aconitase/IPM isomerase family. LeuC type 2 subfamily. In terms of assembly, heterodimer of LeuC and LeuD. [4Fe-4S] cluster is required as a cofactor.

The enzyme catalyses (2R,3S)-3-isopropylmalate = (2S)-2-isopropylmalate. Its pathway is amino-acid biosynthesis; L-leucine biosynthesis; L-leucine from 3-methyl-2-oxobutanoate: step 2/4. Its function is as follows. Catalyzes the isomerization between 2-isopropylmalate and 3-isopropylmalate, via the formation of 2-isopropylmaleate. This is 3-isopropylmalate dehydratase large subunit from Wolinella succinogenes (strain ATCC 29543 / DSM 1740 / CCUG 13145 / JCM 31913 / LMG 7466 / NCTC 11488 / FDC 602W) (Vibrio succinogenes).